The following is a 200-amino-acid chain: Sperm acrosome developmental regulator (200 aa).

The residue at position 63 (serine 63) is a Phosphoserine. A compositionally biased stretch (basic residues) spans 167-183 (QERRRRRRMRSHASHTS). The interval 167-200 (QERRRRRRMRSHASHTSRHSESVQGLKHDARSPL) is disordered. The span at 184-200 (RHSESVQGLKHDARSPL) shows a compositional bias: basic and acidic residues.

It is found in the cytoplasmic vesicle. The protein localises to the secretory vesicle. Its subcellular location is the acrosome. In terms of biological role, may play an important role in acrosome formation and nucleus shaping during spermiogenesis. The chain is Sperm acrosome developmental regulator (Spacdr) from Rattus norvegicus (Rat).